The chain runs to 143 residues: Nucleoside diphosphate kinase (143 aa).

ATP is bound by residues lysine 11, phenylalanine 59, arginine 87, threonine 93, arginine 104, and asparagine 114. Histidine 117 acts as the Pros-phosphohistidine intermediate in catalysis.

It belongs to the NDK family. In terms of assembly, homotetramer. Mg(2+) is required as a cofactor.

It is found in the cytoplasm. The enzyme catalyses a 2'-deoxyribonucleoside 5'-diphosphate + ATP = a 2'-deoxyribonucleoside 5'-triphosphate + ADP. It catalyses the reaction a ribonucleoside 5'-diphosphate + ATP = a ribonucleoside 5'-triphosphate + ADP. In terms of biological role, major role in the synthesis of nucleoside triphosphates other than ATP. The ATP gamma phosphate is transferred to the NDP beta phosphate via a ping-pong mechanism, using a phosphorylated active-site intermediate. In Shewanella loihica (strain ATCC BAA-1088 / PV-4), this protein is Nucleoside diphosphate kinase.